A 161-amino-acid chain; its full sequence is 2-C-methyl-D-erythritol 2,4-cyclodiphosphate synthase (161 aa).

Residues aspartate 8 and histidine 10 each contribute to the a divalent metal cation site. Residues 8–10 (DVH) and 34–35 (HS) contribute to the 4-CDP-2-C-methyl-D-erythritol 2-phosphate site. Residue histidine 42 coordinates a divalent metal cation. 4-CDP-2-C-methyl-D-erythritol 2-phosphate-binding positions include 56-58 (DIG), 61-65 (FPDTD), 100-106 (AQSPKMA), 132-135 (TTEE), and phenylalanine 139.

The protein belongs to the IspF family. In terms of assembly, homotrimer. The cofactor is a divalent metal cation.

It carries out the reaction 4-CDP-2-C-methyl-D-erythritol 2-phosphate = 2-C-methyl-D-erythritol 2,4-cyclic diphosphate + CMP. The protein operates within isoprenoid biosynthesis; isopentenyl diphosphate biosynthesis via DXP pathway; isopentenyl diphosphate from 1-deoxy-D-xylulose 5-phosphate: step 4/6. Involved in the biosynthesis of isopentenyl diphosphate (IPP) and dimethylallyl diphosphate (DMAPP), two major building blocks of isoprenoid compounds. Catalyzes the conversion of 4-diphosphocytidyl-2-C-methyl-D-erythritol 2-phosphate (CDP-ME2P) to 2-C-methyl-D-erythritol 2,4-cyclodiphosphate (ME-CPP) with a corresponding release of cytidine 5-monophosphate (CMP). This Clostridioides difficile (strain 630) (Peptoclostridium difficile) protein is 2-C-methyl-D-erythritol 2,4-cyclodiphosphate synthase.